A 121-amino-acid chain; its full sequence is Large ribosomal subunit protein bL12 (121 aa).

This sequence belongs to the bacterial ribosomal protein bL12 family. Homodimer. Part of the ribosomal stalk of the 50S ribosomal subunit. Forms a multimeric L10(L12)X complex, where L10 forms an elongated spine to which 2 to 4 L12 dimers bind in a sequential fashion. Binds GTP-bound translation factors.

Functionally, forms part of the ribosomal stalk which helps the ribosome interact with GTP-bound translation factors. Is thus essential for accurate translation. This Serratia proteamaculans (strain 568) protein is Large ribosomal subunit protein bL12.